The primary structure comprises 70 residues: MAKRCEVCGKAPRSGNTVSHSDKKSGRWFRPNLQKVRVVLPDGTIKRMRVCTSCLKSGKVKKYVGQVSEV.

The interval M1–G26 is disordered.

This sequence belongs to the bacterial ribosomal protein bL28 family.

The chain is Large ribosomal subunit protein bL28 (rpmB) from Thermotoga maritima (strain ATCC 43589 / DSM 3109 / JCM 10099 / NBRC 100826 / MSB8).